We begin with the raw amino-acid sequence, 577 residues long: Solute carrier family 22 member 16 (577 aa).

The chain crosses the membrane as a helical span at residues 23–43 (LYFICAFQNISCGIHYLASVF). 4 N-linked (GlcNAc...) asparagine glycosylation sites follow: Asn57, Asn65, Asn68, and Asn108. 5 consecutive transmembrane segments (helical) span residues 152 to 172 (WLAMLIQPLFMFGVLLGSVTF), 183 to 203 (VVLWATSSSMFLFGIAAAFAV), 214 to 234 (FLAMVASGYLVVGFVYVMEFI), 244 to 264 (VHLHSFFAVGTLLVALTGYLV), and 268 to 288 (WLYQMILSTVTVPFILCCWVL). N-linked (GlcNAc...) asparagine glycans are attached at residues Asn345 and Asn352. Helical transmembrane passes span 359 to 379 (TLTVWLIWFTGSLGFYSFSLN), 389 to 409 (LNLFLLGVVEIPAYTFVCIAM), 416 to 436 (TVLAYSLFCSALACGVVMVIP), 441 to 461 (ILGVVTAMVGKFAIGAAFGLI), 476 to 496 (LAVGSGSMVCRLASILAPFSV), and 501 to 521 (IWIFIPQLFVGTMALLSGVLT). The segment at 543–577 (ESENESKSSKLLLTTNNSGLEKTEAITPRDSGLGE) is disordered. 2 N-linked (GlcNAc...) asparagine glycosylation sites follow: Asn546 and Asn558. Residues 551-560 (SKLLLTTNNS) show a composition bias toward low complexity.

This sequence belongs to the major facilitator (TC 2.A.1) superfamily. Organic cation transporter (TC 2.A.1.19) family. Expressed in testis and epididymis (at protein level). Expressed in endometrium (at protein level); highly expressed during the normal secretory phase, but expression is significantly reduced in the proliferative phase. Expressed at lower levels in adult tissues including bone marrow (at protein level). Expressed in hematopoietic cells, including CD34(+) leukocytes. Expressed in fetal liver (at protein level), brain, lung, kidney, heart, skeletal muscle, spleen and thymus. Expressed in leukemia cells. Abundantly expressed in ovarian cancer clear-cell adenocarcinoma.

It is found in the cell membrane. The catalysed reaction is (R)-carnitine(in) = (R)-carnitine(out). It catalyses the reaction spermidine(in) = spermidine(out). In terms of biological role, facilitative organic cation transporter that mediates the transport of carnitine as well as the polyamine spermidine. Mediates the partially Na(+)-dependent bidirectional transport of carnitine. May mediate L-carnitine secretion from testis epididymal epithelium into the lumen which is involved in the maturation of spermatozoa. In Homo sapiens (Human), this protein is Solute carrier family 22 member 16.